The chain runs to 62 residues: Conotoxin Sr5.6 (62 aa).

Positions 1-22 (MRCLPVFVILLLLIASASSVDA) are cleaved as a signal peptide. Residues 23-44 (QLKTKDDVPLTSVHDNAKGTQH) constitute a propeptide that is removed on maturation. Proline amide is present on Pro61.

This sequence belongs to the conotoxin T superfamily. Post-translationally, contains 2 disulfide bonds that can be either 'C1-C3, C2-C4' or 'C1-C4, C2-C3', since these disulfide connectivities have been observed for conotoxins with cysteine framework V (for examples, see AC P0DQQ7 and AC P81755). As to expression, expressed by the venom duct.

It is found in the secreted. This is Conotoxin Sr5.6 from Conus spurius (Alphabet cone).